The sequence spans 331 residues: Ketol-acid reductoisomerase (NADP(+)) (331 aa).

Residues 2 to 182 (ARMYYDEDAN…GGTRGGVLET (181 aa)) form the KARI N-terminal Rossmann domain. NADP(+) contacts are provided by residues 25–28 (YGSQ), S51, S53, and 83–86 (DEVQ). Residue H108 is part of the active site. Residue G134 coordinates NADP(+). Positions 183-328 (TFREETETDL…KDLRAMFSWL (146 aa)) constitute a KARI C-terminal knotted domain. 4 residues coordinate Mg(2+): D191, E195, E227, and E231. Position 252 (S252) interacts with substrate.

The protein belongs to the ketol-acid reductoisomerase family. The cofactor is Mg(2+).

It catalyses the reaction (2R)-2,3-dihydroxy-3-methylbutanoate + NADP(+) = (2S)-2-acetolactate + NADPH + H(+). The enzyme catalyses (2R,3R)-2,3-dihydroxy-3-methylpentanoate + NADP(+) = (S)-2-ethyl-2-hydroxy-3-oxobutanoate + NADPH + H(+). It participates in amino-acid biosynthesis; L-isoleucine biosynthesis; L-isoleucine from 2-oxobutanoate: step 2/4. It functions in the pathway amino-acid biosynthesis; L-valine biosynthesis; L-valine from pyruvate: step 2/4. Its function is as follows. Involved in the biosynthesis of branched-chain amino acids (BCAA). Catalyzes an alkyl-migration followed by a ketol-acid reduction of (S)-2-acetolactate (S2AL) to yield (R)-2,3-dihydroxy-isovalerate. In the isomerase reaction, S2AL is rearranged via a Mg-dependent methyl migration to produce 3-hydroxy-3-methyl-2-ketobutyrate (HMKB). In the reductase reaction, this 2-ketoacid undergoes a metal-dependent reduction by NADPH to yield (R)-2,3-dihydroxy-isovalerate. This is Ketol-acid reductoisomerase (NADP(+)) from Nostoc sp. (strain PCC 7120 / SAG 25.82 / UTEX 2576).